The sequence spans 640 residues: F-box only protein 43 (640 aa).

Thr176 carries the post-translational modification Phosphothreonine. A Phosphoserine modification is found at Ser275. Residues 328–354 (LQEQGQSEDEMQTVHPNSDSGVLESLQ) form a disordered region. Positions 423 to 480 (MGIEQLDILTELQYRNLKHILAMVLESLTSESLYSAWNVSRNWREIVAQDKKANRRRK) constitute an F-box domain. The ZBR-type zinc-finger motif lies at 568-616 (ALKPCPRCQSPAKYQPHKKRGLCSRLACGFDFCVLCLCAYHGSEDCRRG). 8 residues coordinate Zn(2+): Cys572, Cys575, Cys590, Cys595, Cys600, Cys603, His608, and Cys613. Positions 615-640 (RGSAKARGSKDVLPGSAQSKRNLKRL) are disordered.

Part of a SCF (SKP1-cullin-F-box) protein ligase complex. Interaction with SKP1 does not occur. Interacts with ANAPC2; the interaction is direct, ANAPC4, CDC16, CDC23; the interaction is direct, ANAPC10; the interaction is direct and CDC26, during spermatogenesis. Interacts with CDC20. Phosphorylated on Thr-176 and Ser-275 in response to calcium, which is a prerequisite for ubiquitination and proteasomal degradation. In terms of processing, ubiquitinated in response to calcium, which promotes proteasomal degradation. As to expression, present in testis and ovary (at protein level). Expression is high in immature oocytes, and diminishes after oocyte activation. Expressed post-meiotically in spermatids and sperm.

Its pathway is protein modification; protein ubiquitination. In terms of biological role, required to establish and maintain the arrest of oocytes at the second meiotic metaphase until fertilization. Acts by inhibiting the anaphase-promoting complex/cyclosome (APC/C) ubiquitin ligase. Probably recognizes and binds to some phosphorylated proteins and promotes their ubiquitination and degradation. Plays a vital role in modulating the ubiquitilation of CCNB1 and CDK1 during gametogenesis. The sequence is that of F-box only protein 43 (Fbxo43) from Mus musculus (Mouse).